A 224-amino-acid chain; its full sequence is Germin-like protein 8-8 (224 aa).

Positions 1–22 (MASPSFCLLAALLALVSWQAIA) are cleaved as a signal peptide. Residues cysteine 32 and cysteine 47 are joined by a disulfide bond. The Cupin type-1 domain occupies 62–212 (AMLDTPRKTN…AFQVEKGTID (151 aa)). N-linked (GlcNAc...) asparagine glycosylation is present at asparagine 76. Mn(2+) contacts are provided by histidine 109, histidine 111, and glutamate 116. Asparagine 135 carries N-linked (GlcNAc...) asparagine glycosylation. Histidine 157 contacts Mn(2+).

Belongs to the germin family. In terms of assembly, oligomer (believed to be a pentamer but probably hexamer).

Its subcellular location is the secreted. It localises to the extracellular space. The protein localises to the apoplast. Plays a role in broad-spectrum disease resistance. Probably has no oxalate oxidase activity even if the active site is conserved. The sequence is that of Germin-like protein 8-8 from Oryza sativa subsp. japonica (Rice).